The following is a 214-amino-acid chain: NADH-quinone oxidoreductase subunit C (214 aa).

Belongs to the complex I 30 kDa subunit family. NDH-1 is composed of 14 different subunits. Subunits NuoB, C, D, E, F, and G constitute the peripheral sector of the complex.

Its subcellular location is the cell inner membrane. The enzyme catalyses a quinone + NADH + 5 H(+)(in) = a quinol + NAD(+) + 4 H(+)(out). In terms of biological role, NDH-1 shuttles electrons from NADH, via FMN and iron-sulfur (Fe-S) centers, to quinones in the respiratory chain. The immediate electron acceptor for the enzyme in this species is believed to be ubiquinone. Couples the redox reaction to proton translocation (for every two electrons transferred, four hydrogen ions are translocated across the cytoplasmic membrane), and thus conserves the redox energy in a proton gradient. In Francisella tularensis subsp. tularensis (strain WY96-3418), this protein is NADH-quinone oxidoreductase subunit C.